The following is a 331-amino-acid chain: 5-formaminoimidazole-4-carboxamide-1-(beta)-D-ribofuranosyl 5'-monophosphate synthetase (331 aa).

2 residues coordinate 5-amino-1-(5-phospho-beta-D-ribosyl)imidazole-4-carboxamide: His-9 and Ser-69. The ATP-grasp domain maps to 76–322 (VELVEKMKVP…IAMELKQGLE (247 aa)). ATP contacts are provided by residues 120-179 (PDDI…VPVY) and Glu-201. Asn-229 is a binding site for 5-amino-1-(5-phospho-beta-D-ribosyl)imidazole-4-carboxamide. Mg(2+) contacts are provided by Glu-267 and Glu-280.

The protein belongs to the phosphohexose mutase family. The cofactor is Mg(2+). It depends on Mn(2+) as a cofactor.

It carries out the reaction 5-amino-1-(5-phospho-beta-D-ribosyl)imidazole-4-carboxamide + formate + ATP = 5-formamido-1-(5-phospho-D-ribosyl)imidazole-4-carboxamide + ADP + phosphate. The protein operates within purine metabolism; IMP biosynthesis via de novo pathway; 5-formamido-1-(5-phospho-D-ribosyl)imidazole-4-carboxamide from 5-amino-1-(5-phospho-D-ribosyl)imidazole-4-carboxamide (formate route): step 1/1. Catalyzes the ATP- and formate-dependent formylation of 5-aminoimidazole-4-carboxamide-1-beta-d-ribofuranosyl 5'-monophosphate (AICAR) to 5-formaminoimidazole-4-carboxamide-1-beta-d-ribofuranosyl 5'-monophosphate (FAICAR) in the absence of folates. The polypeptide is 5-formaminoimidazole-4-carboxamide-1-(beta)-D-ribofuranosyl 5'-monophosphate synthetase (Thermococcus kodakarensis (strain ATCC BAA-918 / JCM 12380 / KOD1) (Pyrococcus kodakaraensis (strain KOD1))).